Consider the following 434-residue polypeptide: Trigger factor (434 aa).

The 86-residue stretch at 160–245 (GDKVKMNFVG…LTEVQAANLP (86 aa)) folds into the PPIase FKBP-type domain.

The protein belongs to the FKBP-type PPIase family. Tig subfamily.

It localises to the cytoplasm. The enzyme catalyses [protein]-peptidylproline (omega=180) = [protein]-peptidylproline (omega=0). Its function is as follows. Involved in protein export. Acts as a chaperone by maintaining the newly synthesized protein in an open conformation. Functions as a peptidyl-prolyl cis-trans isomerase. This is Trigger factor from Shewanella baltica (strain OS223).